We begin with the raw amino-acid sequence, 53 residues long: Chlorophyll a-b binding protein 1, chloroplastic (53 aa).

Phe18 provides a ligand contact to chlorophyll b. 2 residues coordinate chlorophyll a: Glu48 and His51. Arg53 lines the chlorophyll b pocket.

Belongs to the light-harvesting chlorophyll a/b-binding (LHC) protein family. In terms of assembly, the LHC complex consists of chlorophyll a-b binding proteins. Binds at least 14 chlorophylls (8 Chl-a and 6 Chl-b) and carotenoids such as lutein and neoxanthin. is required as a cofactor. Post-translationally, photoregulated by reversible phosphorylation of its threonine residues.

The protein localises to the plastid. The protein resides in the chloroplast thylakoid membrane. The light-harvesting complex (LHC) functions as a light receptor, it captures and delivers excitation energy to photosystems with which it is closely associated. The polypeptide is Chlorophyll a-b binding protein 1, chloroplastic (Populus euphratica (Euphrates poplar)).